The sequence spans 174 residues: Large ribosomal subunit protein uL13 (174 aa).

Disordered stretches follow at residues 1–22 (MAFPDTDVSPPRGGPSSPAKSP) and 153–174 (GETHPHSAQKPQVLKTQPLEVK).

It belongs to the universal ribosomal protein uL13 family. In terms of assembly, part of the 50S ribosomal subunit. Contacts proteins L3 and L20.

This protein is one of the early assembly proteins of the 50S ribosomal subunit. Binds to the 23S rRNA. This chain is Large ribosomal subunit protein uL13 (rplM), found in Deinococcus radiodurans (strain ATCC 13939 / DSM 20539 / JCM 16871 / CCUG 27074 / LMG 4051 / NBRC 15346 / NCIMB 9279 / VKM B-1422 / R1).